An 850-amino-acid polypeptide reads, in one-letter code: Coiled-coil and C2 domain-containing protein 1B (850 aa).

The span at 1-10 (MPGPRPRKGP) shows a compositional bias: basic residues. 3 disordered regions span residues 1–21 (MPGPRPRKGPKTSGQGAETAK), 54–73 (LTGETGSTSRKPAPKGRAPL), and 114–145 (GVDEETGLVDDSEETSPDLSEEKTRDNTEQPV). Positions 114–129 (GVDEETGLVDDSEETS) are enriched in acidic residues. Positions 167-213 (LQALLEERIQNYREAAASAKEAGEAAKARRCERGLKTLESQLATVRK) form a coiled coil. Disordered regions lie at residues 215 to 277 (GKIC…SDPD) and 436 to 525 (FAEL…SPSV). A compositionally biased stretch (basic and acidic residues) spans 234-244 (AHQERPSKDSE). Residues 440–450 (PVPPGFPPIPG) show a composition bias toward pro residues. 2 stretches are compositionally biased toward low complexity: residues 489–502 (PAQAPLAKKPAQPL) and 511–524 (EPKASSSKESLSPS). The residue at position 585 (Ser-585) is a Phosphoserine. Thr-588 carries the phosphothreonine modification. The C2 domain occupies 668–807 (DPPSHHFELK…EKECEIREIM (140 aa)).

As to quaternary structure, interacts with CHMP4B. As to expression, expressed in epididymal sperm but not in testicular sperm (at protein level).

It localises to the nucleus. Transcription factor that binds specifically to the DRE (dual repressor element) and represses HTR1A gene transcription in neuronal cells. The sequence is that of Coiled-coil and C2 domain-containing protein 1B (Cc2d1b) from Rattus norvegicus (Rat).